The following is a 697-amino-acid chain: MTAKPHKSCQFKRDYPQLINLYPPCALTTAQSLDNFTRLRRSRLTTPSAQLGQELYVMGQWGLGDGLELLSLLHHWQTQTQSNTRLLVKVFEPNPINDYELKLLWDQSQSLISTPHLQPIANAILKAKPARIIGCQRLIFDDGRITVDLHFGDLHTSLTNLPHSPAHPIQQWLVLPHLASQLSGKLAWQMARLSADDAQLIGVNLAETVQQLAHSSGFSTLNVSQDALNGDASDALPSQIITDEILLHERKLLRQQADTAQAFTPKPATLAAIDHPVAIVGGGLASANLMLSLAERGQSSTLFCKDNELGQGASGNRQGAIYPLLTPENDELSRFFQQAFLFSRRRIEALSQASMMDTNAAPHVTVISHDFCGVLQTGHDERSQQRLDKIIQSQDWPAEIAYAVDANEANEIAQIGIDKAGFFYPLGGWVCPFEYAKAAVDKASQLANVQCHFNTEITEIECDAQAWYLHSQGQRFGPFRQLVLANGAQLTQFSASERLQISPFRGQVSHVPAQFKLSQLATVLCANGYLTPSHQGLHCLGASYVKAAEHFDFCPQEQRENLGKMQESYPNQAWVDDIDISGNSARVGVRMVTRDHFPMMGCAPDVAEILARYELHQLNQQQAEQSKHYWQTTPAPILDGLYILGGLGSRGLSSGPLAAECLAAQLTGEPLPLDWSTLNKLNPNRMWLRKLLKGKAL.

The segment at 1-275 (MTAKPHKSCQ…KPATLAAIDH (275 aa)) is tRNA (mnm(5)s(2)U34)-methyltransferase. Positions 280–697 (VGGGLASANL…LRKLLKGKAL (418 aa)) are FAD-dependent cmnm(5)s(2)U34 oxidoreductase.

This sequence in the N-terminal section; belongs to the methyltransferase superfamily. tRNA (mnm(5)s(2)U34)-methyltransferase family. The protein in the C-terminal section; belongs to the DAO family. Requires FAD as cofactor.

It is found in the cytoplasm. It carries out the reaction 5-aminomethyl-2-thiouridine(34) in tRNA + S-adenosyl-L-methionine = 5-methylaminomethyl-2-thiouridine(34) in tRNA + S-adenosyl-L-homocysteine + H(+). Functionally, catalyzes the last two steps in the biosynthesis of 5-methylaminomethyl-2-thiouridine (mnm(5)s(2)U) at the wobble position (U34) in tRNA. Catalyzes the FAD-dependent demodification of cmnm(5)s(2)U34 to nm(5)s(2)U34, followed by the transfer of a methyl group from S-adenosyl-L-methionine to nm(5)s(2)U34, to form mnm(5)s(2)U34. In Shewanella sp. (strain ANA-3), this protein is tRNA 5-methylaminomethyl-2-thiouridine biosynthesis bifunctional protein MnmC.